We begin with the raw amino-acid sequence, 281 residues long: 4-diphosphocytidyl-2-C-methyl-D-erythritol kinase (281 aa).

The active site involves lysine 11. 92–102 (LVSAGLAGGSA) lines the ATP pocket. Residue aspartate 132 is part of the active site.

The protein belongs to the GHMP kinase family. IspE subfamily.

The catalysed reaction is 4-CDP-2-C-methyl-D-erythritol + ATP = 4-CDP-2-C-methyl-D-erythritol 2-phosphate + ADP + H(+). It functions in the pathway isoprenoid biosynthesis; isopentenyl diphosphate biosynthesis via DXP pathway; isopentenyl diphosphate from 1-deoxy-D-xylulose 5-phosphate: step 3/6. Functionally, catalyzes the phosphorylation of the position 2 hydroxy group of 4-diphosphocytidyl-2C-methyl-D-erythritol. This Ehrlichia ruminantium (strain Welgevonden) protein is 4-diphosphocytidyl-2-C-methyl-D-erythritol kinase.